Here is a 736-residue protein sequence, read N- to C-terminus: MGEIATEFTPVMDDDDDRCVVPEVELTVPKTDDSTLPVLTFRMWVLGIGACIVLSFINQFFWYRTMPLSITGISAQIAVVPLGHLMARVLPTKRFLEGTRFQFTLNPGAFNVKEHVLITIFANSGAGSVYATHILSAIKLYYKRSLPFLPAFLVMITTQILGFGWAGLFRKHLVEPGEMWWPSNLVQVSLFGALHEKEKKSRGGMSRTQFFLIVLVASFAYYIFPGYLFTMLTSISWVCWLNPKSILVNQLGSGEHGLGIGSIGFDWVTISAYLGSPLASPLFASVNVAIGFVLVMYIVTPVCYWLNIYDAKTFPIFSSQLFMGNGSRYDVLSIIDSKFHLDRVVYSRTGSINMSTFFAVTYGLGFATLSATIVHVLVFNGSDLWKQTRGAFQKNKKMDIHTRIMKKNYREVPLWWFLVILLLNIALIMFISVHYNATVQLPWWGVLLACAIAISFTPLIGVIAATTNQAPGLNIITEYVIGYIYPERPVANMCFKVYGYISMTQALTFISDFKLGHYMKIPPRSMFMAQVAGTLVAVVVYTGTAWWLMEEIPHLCDTSLLPSDSQWTCPMDRVFFDASVIWGLVGPRRVFGDLGEYSNVNWFFLVGAIAPLLVWLATKMFPAQTWIAKIHIPVLVGATAMMPPATAVNFTSWLIVAFIFGHFIFKYRRVWWTKYNYVLSGGLDAGSAFMTILLFLALGRKGIEVQWWGNSGDRDTCPLASCPTAKGVVVKGCPVF.

Helical transmembrane passes span 43-63 (MWVL…FFWY), 66-86 (MPLS…GHLM), 116-136 (VLIT…HILS), 148-168 (FLPA…WAGL), 210-230 (FFLI…YLFT), 258-278 (LGIG…GSPL), 288-308 (VAIG…WLNI), 357-377 (FFAV…VHVL), 412-432 (VPLW…MFIS), 443-463 (WWGV…IGVI), 489-511 (PVAN…TFIS), 527-547 (FMAQ…TAWW), 602-622 (WFFL…KMFP), 645-665 (ATAV…HFIF), and 678-698 (VLSG…FLAL).

It belongs to the oligopeptide OPT transporter (TC 2.A.67.1) family. Expressed in flowers and roots, and at a low level in leaves and stems. Detected in the cambial zone of the vascular bundles and in the region of lateral root initiation. Low expression in the vascular network of the petals and high in the stamen filaments and the gynoecium.

The protein resides in the membrane. Its function is as follows. Involved in the translocation of tetra- and pentapeptides across the cellular membrane in an energy-dependent manner. Also involved in transport of glutathione derivatives and metal complexes, and may be involved in stress resistance. This chain is Oligopeptide transporter 6 (OPT6), found in Arabidopsis thaliana (Mouse-ear cress).